Here is a 417-residue protein sequence, read N- to C-terminus: Snake venom metalloproteinase kistomin (417 aa).

An N-terminal signal peptide occupies residues 1 to 20 (MIEVLLVTICLAAFPYQGSS). Positions 21–189 (IILESGNVND…KKPFRLNLTP (169 aa)) are excised as a propeptide. The 195-residue stretch at 197–391 (AKVYLVIVAD…RKPECLFKKP (195 aa)) folds into the Peptidase M12B domain. Cystine bridges form between cysteine 308/cysteine 386, cysteine 348/cysteine 370, and cysteine 350/cysteine 353. Position 333 (histidine 333) interacts with Zn(2+). The active site involves glutamate 334. The Zn(2+) site is built by histidine 337 and histidine 343. A propeptide spanning residues 392–417 (LRTDTVSTPVSGNEPLEVITMDDFYA) is cleaved from the precursor.

This sequence belongs to the venom metalloproteinase (M12B) family. P-I subfamily. Monomer. Requires Zn(2+) as cofactor. Expressed by the venom gland.

The protein resides in the secreted. Its activity is regulated as follows. Inhibited by EDTA, and O-phenanthrolene. Functionally, snake venom zinc metalloprotease that inhibits platelet aggregation by binding specifically to platelet glycoprotein VI (GP6) and platelet glycoprotein Ib alpha (GP1BA). It inhibits the interaction between collagen and platelet GP6 by cleaving GP6 (at '225-Glu-|-Ala-226' and '238-Val-|-Phe-239' bonds), and inhibits vWF-induced platelet aggregation by cleaving GP1BA and vWF. Cleavage of GP1BA occurs at two distinct sites to generate two soluble fragments. It also cleaves alpha- (FGA) and subsequently the gamma-chain (FGG) of fibrinogen, leaving the beta-chain unaffected. It also inhibits collagen-, convulxin- and ristocetin-induced platelet aggregation. It blocks the adhesion of platelet to immobilized collagen, but only exerts a slight inhibition to fibrinogen. In vivo, it exerts potent antithrombotic effect. The chain is Snake venom metalloproteinase kistomin from Calloselasma rhodostoma (Malayan pit viper).